A 295-amino-acid polypeptide reads, in one-letter code: Perivine-Nbeta-methyltransferase (295 aa).

The tract at residues 76-85 (ILDVGCGKGG) is SAM motif I. The Vacuolar targeting signal motif lies at 138–144 (DGSFELI). The interval 139-147 (GSFELIFVI) is SAM motif II. The segment at 166–175 (VAAPGAQIVI) is SAM motif III.

The protein belongs to the class I-like SAM-binding methyltransferase superfamily. gTMT family. Homodimer. In terms of tissue distribution, mainly expressed in young leaves, and, to a lower extent, in mature leaves, flowers, stems and roots (at protein level). Transcripts levels are highest in flowers, moderate in leaves and low in roots and stems.

It is found in the vacuole membrane. It catalyses the reaction perivine + S-adenosyl-L-methionine = vobasine + S-adenosyl-L-homocysteine + 2 H(+). It participates in alkaloid biosynthesis; vindoline biosynthesis. Its function is as follows. S-adenosyl-L-methionine-dependent N-methyltransferase involved in the biosynthesis of biologically active monoterpenoid indole alkaloids (MIAs) natural products including vindoline. Catalyzes the conversion of perivine to Nbeta-methylperivine (vobasine) by methylating its N4 nitrogen. Inactive with picrinine as substrate. In Catharanthus roseus (Madagascar periwinkle), this protein is Perivine-Nbeta-methyltransferase.